The primary structure comprises 230 residues: Osmotin-like protein PR-5x (230 aa).

Positions 1 to 25 (MYTNMGYLTSSFIFFFLALVTYTYA) are cleaved as a signal peptide. 8 cysteine pairs are disulfide-bonded: C34/C229, C76/C86, C91/C97, C145/C217, C150/C200, C158/C168, C172/C181, and C182/C187.

Belongs to the thaumatin family.

It localises to the secreted. The protein resides in the vacuole. It carries out the reaction Endohydrolysis of (1-&gt;3)- or (1-&gt;4)-linkages in beta-D-glucans when the glucose residue whose reducing group is involved in the linkage to be hydrolyzed is itself substituted at C-3.. Its function is as follows. Antifungal protein. May bind to beta-glucans and have beta-1,3-D-glucanase activity. The protein is Osmotin-like protein PR-5x of Solanum lycopersicum (Tomato).